Consider the following 119-residue polypeptide: MVQDATADGVMDASDACCAPPGNVDSDAMATDLQVLSAMGNDTRYELLRRIANADDGVCVCDLEATVGVSQSAVSQALSRLYTAGLVTRRKEGSWRYYEPTETTEVLLETLDDLRGNHE.

The region spanning 24–119 is the HTH arsR-type domain; sequence VDSDAMATDL…TLDDLRGNHE (96 aa). Positions 60-83 form a DNA-binding region, H-T-H motif; it reads VCDLEATVGVSQSAVSQALSRLYT.

In terms of biological role, transcriptional repressor for the arsR2M operon. This Halobacterium salinarum (strain ATCC 700922 / JCM 11081 / NRC-1) (Halobacterium halobium) protein is Putative arsenical resistance operon repressor ArsR2 (arsR2).